The chain runs to 90 residues: Acylphosphatase (90 aa).

The region spanning 4 to 90 (RMYVKVYGIV…KGEFNNFDTY (87 aa)) is the Acylphosphatase-like domain. Catalysis depends on residues R19 and N37.

It belongs to the acylphosphatase family.

The enzyme catalyses an acyl phosphate + H2O = a carboxylate + phosphate + H(+). This chain is Acylphosphatase (acyP), found in Sulfurisphaera tokodaii (strain DSM 16993 / JCM 10545 / NBRC 100140 / 7) (Sulfolobus tokodaii).